We begin with the raw amino-acid sequence, 299 residues long: Ribosomal RNA small subunit methyltransferase H (299 aa).

Residues 36–38, aspartate 55, tyrosine 82, aspartate 103, and glutamine 110 each bind S-adenosyl-L-methionine; that span reads GGH. 2 stretches are compositionally biased toward basic and acidic residues: residues 269 to 282 and 289 to 299; these read PVRP…ENPR and RAAERIEEGGD. Residues 269–299 are disordered; it reads PVRPSEEEIRENPRARSGRLRAAERIEEGGD.

It belongs to the methyltransferase superfamily. RsmH family.

It localises to the cytoplasm. The enzyme catalyses cytidine(1402) in 16S rRNA + S-adenosyl-L-methionine = N(4)-methylcytidine(1402) in 16S rRNA + S-adenosyl-L-homocysteine + H(+). In terms of biological role, specifically methylates the N4 position of cytidine in position 1402 (C1402) of 16S rRNA. The polypeptide is Ribosomal RNA small subunit methyltransferase H (Thermotoga maritima (strain ATCC 43589 / DSM 3109 / JCM 10099 / NBRC 100826 / MSB8)).